The sequence spans 511 residues: 2,3-bisphosphoglycerate-independent phosphoglycerate mutase (511 aa).

Residues Asp-12 and Ser-62 each coordinate Mn(2+). Ser-62 functions as the Phosphoserine intermediate in the catalytic mechanism. Residues His-123, 154-155, Arg-181, Arg-187, 252-255, and Lys-335 each bind substrate; these read RD and RPDR. Mn(2+)-binding residues include Asp-402, His-406, Asp-444, His-445, and His-462.

The protein belongs to the BPG-independent phosphoglycerate mutase family. Monomer. Mn(2+) serves as cofactor.

It carries out the reaction (2R)-2-phosphoglycerate = (2R)-3-phosphoglycerate. It participates in carbohydrate degradation; glycolysis; pyruvate from D-glyceraldehyde 3-phosphate: step 3/5. Catalyzes the interconversion of 2-phosphoglycerate and 3-phosphoglycerate. In Acholeplasma laidlawii (strain PG-8A), this protein is 2,3-bisphosphoglycerate-independent phosphoglycerate mutase.